Reading from the N-terminus, the 121-residue chain is ORF8 protein (121 aa).

Positions 1–15 (MKFLVFLGIITTVAA) are cleaved as a signal peptide. One can recognise an SARS ORF8 Ig-like domain in the interval 19–121 (ECSLQSCTQH…HDVRVVLDFI (103 aa)). Intrachain disulfides connect Cys25–Cys90, Cys37–Cys102, and Cys61–Cys83. Asn78 is a glycosylation site (N-linked (GlcNAc...) (complex) asparagine; by host).

As to quaternary structure, homodimer. Interacts with host IL17RA. Interacts with host IL17RC. Interacts with host MHC-I. Post-translationally, glycosylated by the host when secreted via the conventional pathway. The glycosylated form cannot bind IL17A and would not participate in the cytokine storm.

It localises to the secreted. Functionally, plays a role in modulating the host immune response. May act as a secreted virokine by mimicking interleukin-17A (IL17A), and thereby binding to the IL17RA receptor, leading to activation of the IL17 pathway and increased secretion of pro-inflammatory factors. Contributes to the cytokine storm during SARS-CoV-2 infection when secreted by unconventional pathway. May act by down-regulating major histocompability complex class I (MHC-I) at cell surface. May inhibit expression of some members of the IFN-stimulated gene (ISG) family including hosts IGF2BP1/ZBP1, MX1 and MX2, and DHX58. This Severe acute respiratory syndrome coronavirus 2 (2019-nCoV) protein is ORF8 protein.